The primary structure comprises 419 residues: L-rhamnose isomerase (419 aa).

Mn(2+)-binding residues include His-262, Asp-294, and Asp-296.

This sequence belongs to the rhamnose isomerase family. In terms of assembly, homotetramer. Mn(2+) serves as cofactor.

The protein resides in the cytoplasm. The enzyme catalyses L-rhamnopyranose = L-rhamnulose. Its pathway is carbohydrate degradation; L-rhamnose degradation; glycerone phosphate from L-rhamnose: step 1/3. Catalyzes the interconversion of L-rhamnose and L-rhamnulose. The chain is L-rhamnose isomerase from Escherichia coli O6:H1 (strain CFT073 / ATCC 700928 / UPEC).